The primary structure comprises 199 residues: IMP cyclohydrolase (199 aa).

It belongs to the archaeal IMP cyclohydrolase family.

It carries out the reaction IMP + H2O = 5-formamido-1-(5-phospho-D-ribosyl)imidazole-4-carboxamide. It participates in purine metabolism; IMP biosynthesis via de novo pathway; IMP from 5-formamido-1-(5-phospho-D-ribosyl)imidazole-4-carboxamide: step 1/1. Catalyzes the cyclization of 5-formylamidoimidazole-4-carboxamide ribonucleotide to IMP. This is IMP cyclohydrolase from Methanothrix thermoacetophila (strain DSM 6194 / JCM 14653 / NBRC 101360 / PT) (Methanosaeta thermophila).